The chain runs to 745 residues: MSLITRLLTASSPLRLRAMETMSRAGYSSHAKYAEHRPIDKIRNIGISAHIDSGKTTLTERILFYTGRIVEMHEVRGKDNVGATMDSMELERQRGITIQSAATYTLWKDTNINIIDTPGHVDFTVEVERALRVLDGAVLVLCAVGGVQSQTLTVNRQMKRYNVPCLAFINKLDRMGSNPYRVLSQMRSKMNHNAAFIQLPIGVESNCKGIVDLVRERAIYFEGEHGMNLRLDEIPQDMRVESQERRQELIEHLSNADDTFGELFLEEKPFTEDDIKAALRRTCIKRTFTPVLVGTALKNKGVQPLLDAVLEYLPNPGEVENLAFVEKEGQDPEKIVLNPARDGKDAFVGLAFKLEAGRFGQLTYLRCYQGVLRKGDNIFNARTNKKVRIARLVRLHSNQMEDVNEVYAGDIFALFGVDCASGDTFTTNPKNNLAMESIFVPEPVVSMAIKPNNTKDRDNFSKAIARFTKEDPTFHFFFDNDVKETLVSGMGELHLEIYAQRMEREYGCPVTLGKPKVAFRETLVGPCEFDYLHKKQSGGSGQYARIIGIMEPLPPNQNTLLEFVDETVGTNVPKQFVPGVEKGYREMAEKGMLSGHKLSGIRFRLQDGGHHIVDSSELAFMLAAHGAIKEVFQNGNWQILEPIMLVEVTAPEEFQGAVMGHLSKRHGIITGTEGTEGWFTVYAEVPLNDMFGYAGELRSSTQGKGEFTMEYSRYSPCLPDVQDQIVRQYQESQGLGQADKKKRKN.

Residues 1 to 15 (MSLITRLLTASSPLR) constitute a mitochondrion transit peptide. One can recognise a tr-type G domain in the interval 40–317 (DKIRNIGISA…AVLEYLPNPG (278 aa)). GTP-binding positions include 49-56 (AHIDSGKT), 116-120 (DTPGH), and 170-173 (NKLD).

This sequence belongs to the TRAFAC class translation factor GTPase superfamily. Classic translation factor GTPase family. EF-G/EF-2 subfamily.

It is found in the mitochondrion. Its pathway is protein biosynthesis; polypeptide chain elongation. In terms of biological role, mitochondrial GTPase that catalyzes the GTP-dependent ribosomal translocation step during translation elongation. During this step, the ribosome changes from the pre-translocational (PRE) to the post-translocational (POST) state as the newly formed A-site-bound peptidyl-tRNA and P-site-bound deacylated tRNA move to the P and E sites, respectively. Catalyzes the coordinated movement of the two tRNA molecules, the mRNA and conformational changes in the ribosome. Essential during development as it acts as a retrograde signal from mitochondria to the nucleus to slow down cell proliferation if mitochondrial energy output is low. The protein is Elongation factor G, mitochondrial (ico) of Drosophila ananassae (Fruit fly).